We begin with the raw amino-acid sequence, 271 residues long: MDQTFRPKKSLGQHFLKDTAIAYRIVKLLDIHEGENIFEIGPGQGALTRHIYGYNPGQLLLVEKDSCWVDYHSSVKQQNVSKVTIHHLDALKFSWETLCGSWKVISNLPYNVGSALIWDIVSRVQSMSRAVFMVQKEVADRLCACPGTKSYGVLSVWVQSFAKVEWGFIVKPHSFYPQPKVDSAIVTLYPKPREEQPKNSKTFAWIIKQCFQHRRKQMQSILRKIGFLNYYESLERIGISPSARPESLSNQLFQQLSQEFLLQLIDFPKKT.

Positions 14, 16, 41, 63, 89, and 107 each coordinate S-adenosyl-L-methionine.

This sequence belongs to the class I-like SAM-binding methyltransferase superfamily. rRNA adenine N(6)-methyltransferase family. RsmA subfamily.

The protein resides in the cytoplasm. It catalyses the reaction adenosine(1518)/adenosine(1519) in 16S rRNA + 4 S-adenosyl-L-methionine = N(6)-dimethyladenosine(1518)/N(6)-dimethyladenosine(1519) in 16S rRNA + 4 S-adenosyl-L-homocysteine + 4 H(+). Functionally, specifically dimethylates two adjacent adenosines (A1518 and A1519) in the loop of a conserved hairpin near the 3'-end of 16S rRNA in the 30S particle. May play a critical role in biogenesis of 30S subunits. This is Ribosomal RNA small subunit methyltransferase A from Lawsonia intracellularis (strain PHE/MN1-00).